Consider the following 74-residue polypeptide: Cytochrome c oxidase copper chaperone 1 (74 aa).

Residues 1–30 (MTDQPAQNGLIPPPTSEPSKAAASAETKPK) are disordered. 2 residues coordinate Cu cation: Cys-34 and Cys-35. Positions 34–74 (CCACPDTKKLRDECIVEHGESACTKWIEAHKICLRAEGFNV) constitute a CHCH domain. 2 consecutive short sequence motifs (cx9C motif) follow at residues 37 to 47 (CPDTKKLRDEC) and 56 to 66 (CTKWIEAHKIC). 2 disulfide bridges follow: Cys-37/Cys-66 and Cys-47/Cys-56.

The protein belongs to the COX17 family.

Its subcellular location is the mitochondrion intermembrane space. Its function is as follows. Copper chaperone for cytochrome c oxidase (COX). Binds 2 copper ions and delivers them to the Cu(A) site of COX. Can complement the yeast mutant cox17. This Arabidopsis thaliana (Mouse-ear cress) protein is Cytochrome c oxidase copper chaperone 1 (COX17-1).